The primary structure comprises 382 residues: Glutamyl-tRNA reductase (382 aa).

Substrate contacts are provided by residues 38–41 (TCNR), S85, 90–92 (ENQ), and Q96. Catalysis depends on C39, which acts as the Nucleophile. NADP(+) is bound at residue 164–169 (GAGEIG).

Belongs to the glutamyl-tRNA reductase family. Homodimer.

It carries out the reaction (S)-4-amino-5-oxopentanoate + tRNA(Glu) + NADP(+) = L-glutamyl-tRNA(Glu) + NADPH + H(+). It participates in porphyrin-containing compound metabolism; protoporphyrin-IX biosynthesis; 5-aminolevulinate from L-glutamyl-tRNA(Glu): step 1/2. Catalyzes the NADPH-dependent reduction of glutamyl-tRNA(Glu) to glutamate 1-semialdehyde (GSA). This is Glutamyl-tRNA reductase from Methanococcus maripaludis (strain DSM 14266 / JCM 13030 / NBRC 101832 / S2 / LL).